Here is a 967-residue protein sequence, read N- to C-terminus: Haze protective factor 1 (967 aa).

The signal sequence occupies residues 1–23; the sequence is MFNRFNKLQAALALVLYSQSALG. N-linked (GlcNAc...) asparagine glycosylation is found at N28 and N35. The segment at 72–301 is disordered; the sequence is SSSTEVSSSI…STSSASTASG (230 aa). 9 consecutive repeat copies span residues 93-105, 106-118, 119-131, 132-144, 153-165, 166-178, 179-191, 192-204, and 205-217. The segment at 93–278 is 13 X approximate repeats, Ser-rich; sequence SITSSGSSVS…QSGSSVSGSS (186 aa). Residues 218–230 form a 1-10; approximate repeat; the sequence is SATESGSASSVPS. The 1-11; approximate repeat unit spans residues 234 to 247; that stretch reads SVTESGSSSSASES. A 1-12; approximate repeat occupies 248-259; sequence SITQSGTASGSS. A 1-13 repeat occupies 266-278; that stretch reads SVTQSGSSVSGSS. Residues N493, N601, and N638 are each glycosylated (N-linked (GlcNAc...) asparagine). 4 consecutive repeat copies span residues 745-780, 781-815, 816-854, and 855-893. A 4.5 X approximate tandem repeats, Thr-rich region spans residues 745-902; it reads SSKSYTTVTV…ASPKSYTTVT (158 aa). The segment at 836 to 857 is disordered; the sequence is KTVTSEAPKETSETSETSAAPK. A 2-5; truncated repeat occupies 894–902; sequence SPKSYTTVT. A946 carries the GPI-anchor amidated alanine lipid modification. A propeptide spans 947–967 (removed in mature form); sequence AGLNANTLNALVGIFVLAFFN.

This sequence belongs to the SRP1/TIP1 family. Post-translationally, the GPI-anchor is attached to the protein in the endoplasmic reticulum and serves to target the protein to the cell surface. There, the glucosamine-inositol phospholipid moiety is cleaved off and the GPI-modified mannoprotein is covalently attached via its lipidless GPI glycan remnant to the 1,6-beta-glucan of the outer cell wall layer.

The protein resides in the secreted. It is found in the cell wall. Its subcellular location is the membrane. Involved in cell wall organization and biosynthesis. The chain is Haze protective factor 1 (HPF1) from Saccharomyces cerevisiae (strain ATCC 204508 / S288c) (Baker's yeast).